The sequence spans 185 residues: Ribosome maturation factor RimM (185 aa).

In terms of domain architecture, PRC barrel spans 103–177 (SEEYYWYEIL…SIIVKKIEWY (75 aa)).

It belongs to the RimM family. As to quaternary structure, binds ribosomal protein uS19.

The protein localises to the cytoplasm. Its function is as follows. An accessory protein needed during the final step in the assembly of 30S ribosomal subunit, possibly for assembly of the head region. Essential for efficient processing of 16S rRNA. May be needed both before and after RbfA during the maturation of 16S rRNA. It has affinity for free ribosomal 30S subunits but not for 70S ribosomes. The polypeptide is Ribosome maturation factor RimM (Petrotoga mobilis (strain DSM 10674 / SJ95)).